Consider the following 214-residue polypeptide: MIEGLLGRKLGMTQIFDDEGRAIPVTVLEVGPCVVTQVKTSDRDGYQAVQLGFGHRKRQNRPMQGHLRASGASPRYLKEVRVDDATRFQVGQVIDCTIFQPGQLVDVIGWRKGRGFQGGVKRHGFAGGPKTHGQSDRHRAPGSIGPTTDPGRVHKGKRMAGRMGPVRVTVQNLRVERVDPQRNLVLVRGAVPGHPNGLVIVRYAVKQRRAKATA.

A disordered region spans residues Gly-119–Met-159.

It belongs to the universal ribosomal protein uL3 family. As to quaternary structure, part of the 50S ribosomal subunit. Forms a cluster with proteins L14 and L19.

In terms of biological role, one of the primary rRNA binding proteins, it binds directly near the 3'-end of the 23S rRNA, where it nucleates assembly of the 50S subunit. This is Large ribosomal subunit protein uL3 from Thermomicrobium roseum (strain ATCC 27502 / DSM 5159 / P-2).